Reading from the N-terminus, the 510-residue chain is 2,3-bisphosphoglycerate-independent phosphoglycerate mutase (510 aa).

2 residues coordinate Mn(2+): Asp12 and Ser62. The Phosphoserine intermediate role is filled by Ser62. Substrate contacts are provided by residues His123, 153 to 154, Arg185, Arg191, 260 to 263, and Lys335; these read RD and RPDR. Mn(2+) is bound by residues Asp402, His406, Asp443, His444, and His461.

The protein belongs to the BPG-independent phosphoglycerate mutase family. In terms of assembly, monomer. Mn(2+) serves as cofactor.

It carries out the reaction (2R)-2-phosphoglycerate = (2R)-3-phosphoglycerate. It participates in carbohydrate degradation; glycolysis; pyruvate from D-glyceraldehyde 3-phosphate: step 3/5. Functionally, catalyzes the interconversion of 2-phosphoglycerate and 3-phosphoglycerate. In Listeria innocua serovar 6a (strain ATCC BAA-680 / CLIP 11262), this protein is 2,3-bisphosphoglycerate-independent phosphoglycerate mutase.